We begin with the raw amino-acid sequence, 348 residues long: Peptidyl-Lys metalloendopeptidase (348 aa).

The N-terminal stretch at 1–18 is a signal peptide; that stretch reads MFSSVMVALVSLAVAVSA. The propeptide occupies 19-181; the sequence is NPGLSLKVSG…RATPTLTRPV (163 aa). Disulfide bonds link Cys186–Cys256 and Cys258–Cys278. Thr223 is a glycosylation site (O-linked (Man) threonine; partial). His298 contributes to the Zn(2+) binding site. The active site involves Glu299. Zn(2+)-binding residues include His302 and Asp311.

The cofactor is Zn(2+).

It is found in the secreted. The enzyme catalyses Preferential cleavage in proteins: -Xaa-|-Lys- (in which Xaa may be Pro).. Its activity is regulated as follows. Inhibited by chelating agents such as EDTA and 1,10-phenanthroline. This is Peptidyl-Lys metalloendopeptidase (MEP) from Grifola frondosa (Maitake).